We begin with the raw amino-acid sequence, 205 residues long: Type-4 uracil-DNA glycosylase (205 aa).

Residues cysteine 13 and cysteine 16 each contribute to the [4Fe-4S] cluster site. Residues 40–42 (GEG), phenylalanine 54, and asparagine 80 each bind uracil. Residues cysteine 84 and cysteine 100 each contribute to the [4Fe-4S] cluster site. Histidine 155 provides a ligand contact to uracil.

This sequence belongs to the uracil-DNA glycosylase (UDG) superfamily. Type 4 (UDGa) family. In terms of assembly, monomer.

The catalysed reaction is Hydrolyzes single-stranded DNA or mismatched double-stranded DNA and polynucleotides, releasing free uracil.. With respect to regulation, product-inhibited by apurinic/apyrimidinic sites. Functionally, removes uracil bases that are present in DNA as a result of either deamination of cytosine or misincorporation of dUMP instead of dTMP. Can remove uracil from double-stranded DNA containing either a U/G, U/A, U/C or U/T base pair as well as from single-stranded DNA. Specifically recognizes uracil that is flipped out from double-stranded DNA. This chain is Type-4 uracil-DNA glycosylase, found in Thermus thermophilus (strain ATCC 27634 / DSM 579 / HB8).